The following is a 943-amino-acid chain: Zinc finger BED domain-containing protein 39 (943 aa).

Residues 1-99 (MSSVSSDIDG…DIAMDVSGST (99 aa)) are disordered. Residues 12-21 (PETKRFRIDV) are compositionally biased toward basic and acidic residues. Low complexity predominate over residues 50–72 (SPAAPSSASYRSSNSSVISSSES). Basic and acidic residues predominate over residues 73–85 (PIKDEDVDVHDGQ). The BED-type; degenerate zinc finger occupies 184–235 (NKQTPVWKYFVYNKTENLSRCIVGDCTYMLKGPHTSTLACHLKKHTREYSEF). Disordered stretches follow at residues 242 to 315 (YSRT…KEPS) and 328 to 348 (RQAT…PQLP). Positions 262–276 (TLQTQNTPRQTGSPA) are enriched in polar residues. Positions 277 to 292 (STCNTNSNTSSSVSSG) are enriched in low complexity. The segment covering 328 to 338 (RQATNNSNGSP) has biased composition (polar residues).

In terms of tissue distribution, expressed in distal tip cells and in germline cells.

Its subcellular location is the nucleus. It localises to the cytoplasm. Its function is as follows. Regulates the timing and orientation of distal tip cell migration during gonadal development. May act in parallel to cacn-1 and Rac GTPases to control the anterior and posterior migration of distal tip cells. The chain is Zinc finger BED domain-containing protein 39 from Caenorhabditis elegans.